The primary structure comprises 407 residues: uncharacterized protein (407 aa).

Residue lysine 22 forms a Glycyl lysine isopeptide (Lys-Gly) (interchain with G-Cter in ubiquitin) linkage.

It belongs to the SVF1 family.

It localises to the cytoplasm. This is an uncharacterized protein from Saccharomyces cerevisiae (strain ATCC 204508 / S288c) (Baker's yeast).